A 474-amino-acid polypeptide reads, in one-letter code: Methylenetetrahydrofolate--tRNA-(uracil-5-)-methyltransferase TrmFO (474 aa).

14-19 (GGGLAG) is an FAD binding site.

Belongs to the MnmG family. TrmFO subfamily. FAD serves as cofactor.

It is found in the cytoplasm. It catalyses the reaction uridine(54) in tRNA + (6R)-5,10-methylene-5,6,7,8-tetrahydrofolate + NADH + H(+) = 5-methyluridine(54) in tRNA + (6S)-5,6,7,8-tetrahydrofolate + NAD(+). It carries out the reaction uridine(54) in tRNA + (6R)-5,10-methylene-5,6,7,8-tetrahydrofolate + NADPH + H(+) = 5-methyluridine(54) in tRNA + (6S)-5,6,7,8-tetrahydrofolate + NADP(+). Its function is as follows. Catalyzes the folate-dependent formation of 5-methyl-uridine at position 54 (M-5-U54) in all tRNAs. The chain is Methylenetetrahydrofolate--tRNA-(uracil-5-)-methyltransferase TrmFO from Caulobacter vibrioides (strain ATCC 19089 / CIP 103742 / CB 15) (Caulobacter crescentus).